We begin with the raw amino-acid sequence, 287 residues long: Bifunctional protein FolD 2 (287 aa).

Residues glycine 166–serine 168 and isoleucine 232 each bind NADP(+).

Belongs to the tetrahydrofolate dehydrogenase/cyclohydrolase family. In terms of assembly, homodimer.

It catalyses the reaction (6R)-5,10-methylene-5,6,7,8-tetrahydrofolate + NADP(+) = (6R)-5,10-methenyltetrahydrofolate + NADPH. It carries out the reaction (6R)-5,10-methenyltetrahydrofolate + H2O = (6R)-10-formyltetrahydrofolate + H(+). It functions in the pathway one-carbon metabolism; tetrahydrofolate interconversion. Catalyzes the oxidation of 5,10-methylenetetrahydrofolate to 5,10-methenyltetrahydrofolate and then the hydrolysis of 5,10-methenyltetrahydrofolate to 10-formyltetrahydrofolate. The sequence is that of Bifunctional protein FolD 2 from Hydrogenovibrio crunogenus (strain DSM 25203 / XCL-2) (Thiomicrospira crunogena).